The following is a 105-amino-acid chain: Thioredoxin (105 aa).

One can recognise a Thioredoxin domain in the interval 1–105 (MVNNVTDISF…SLLDWINKSI (105 aa)). A disulfide bond links Cys30 and Cys33.

It belongs to the thioredoxin family.

In terms of biological role, component of the thioredoxin-thioredoxin reductase system. Participates in various redox reactions through the reversible oxidation of its active center dithiol to a disulfide and catalyzes dithiol-disulfide exchange reactions. This chain is Thioredoxin (trxA), found in Rickettsia typhi (strain ATCC VR-144 / Wilmington).